The primary structure comprises 314 residues: Glycerate dehydrogenase (314 aa).

NAD(+) contacts are provided by residues threonine 74, 157–158 (AL), 228–230 (TAR), and aspartate 254. Arginine 230 is an active-site residue. Residue glutamate 259 is part of the active site. The active-site Proton donor is the histidine 280. An NAD(+)-binding site is contributed by 280-283 (HVAW).

The protein belongs to the D-isomer specific 2-hydroxyacid dehydrogenase family. Homodimer.

Its subcellular location is the cytoplasm. It carries out the reaction (R)-glycerate + NAD(+) = 3-hydroxypyruvate + NADH + H(+). Its pathway is one-carbon metabolism; formaldehyde assimilation via serine pathway. Plays a central role in assimilation of carbon. It converts hydroxypyruvate to glycerate as a key step in the serine cycle, and may also play an important role in C2 reactions, by interconverting glyoxylate and glycolate. The sequence is that of Glycerate dehydrogenase (hprA) from Methylorubrum extorquens (strain ATCC 14718 / DSM 1338 / JCM 2805 / NCIMB 9133 / AM1) (Methylobacterium extorquens).